Here is a 469-residue protein sequence, read N- to C-terminus: uncharacterized protein (469 aa).

The span at 152–161 (VREGKEEKKG) shows a compositional bias: basic and acidic residues. A disordered region spans residues 152–174 (VREGKEEKKGGPPGRGPPGWRRR). 2 coiled-coil regions span residues 346–375 (KAAL…RSES) and 423–453 (SDIT…KIKG).

This is an uncharacterized protein from Homo sapiens (Human).